Reading from the N-terminus, the 876-residue chain is Leucine--tRNA ligase (876 aa).

The short motif at 43-53 (PYPSGRIHMGH) is the 'HIGH' region element. The 'KMSKS' region signature appears at 632–636 (KMSKS). K635 is a binding site for ATP.

This sequence belongs to the class-I aminoacyl-tRNA synthetase family.

It is found in the cytoplasm. It carries out the reaction tRNA(Leu) + L-leucine + ATP = L-leucyl-tRNA(Leu) + AMP + diphosphate. This Rhodopseudomonas palustris (strain ATCC BAA-98 / CGA009) protein is Leucine--tRNA ligase.